A 111-amino-acid chain; its full sequence is Putative pterin-4-alpha-carbinolamine dehydratase (111 aa).

It belongs to the pterin-4-alpha-carbinolamine dehydratase family.

The enzyme catalyses (4aS,6R)-4a-hydroxy-L-erythro-5,6,7,8-tetrahydrobiopterin = (6R)-L-erythro-6,7-dihydrobiopterin + H2O. This Chlorobaculum tepidum (strain ATCC 49652 / DSM 12025 / NBRC 103806 / TLS) (Chlorobium tepidum) protein is Putative pterin-4-alpha-carbinolamine dehydratase.